The chain runs to 338 residues: Holliday junction branch migration complex subunit RuvB (338 aa).

Residues 1–182 (MDDRMVDQSQ…FGVHLRLEYY (182 aa)) are large ATPase domain (RuvB-L). ATP-binding positions include leucine 21, arginine 22, glycine 63, lysine 66, threonine 67, threonine 68, 129 to 131 (EDF), arginine 172, tyrosine 182, and arginine 219. Threonine 67 serves as a coordination point for Mg(2+). The segment at 183 to 253 (KESELKDIII…TTKRALQLLQ (71 aa)) is small ATPAse domain (RuvB-S). A head domain (RuvB-H) region spans residues 256-338 (DYGLDYIDHK…KNGKRDNFEY (83 aa)). 3 residues coordinate DNA: arginine 292, arginine 311, and arginine 316.

The protein belongs to the RuvB family. In terms of assembly, homohexamer. Forms an RuvA(8)-RuvB(12)-Holliday junction (HJ) complex. HJ DNA is sandwiched between 2 RuvA tetramers; dsDNA enters through RuvA and exits via RuvB. An RuvB hexamer assembles on each DNA strand where it exits the tetramer. Each RuvB hexamer is contacted by two RuvA subunits (via domain III) on 2 adjacent RuvB subunits; this complex drives branch migration. In the full resolvosome a probable DNA-RuvA(4)-RuvB(12)-RuvC(2) complex forms which resolves the HJ.

Its subcellular location is the cytoplasm. It carries out the reaction ATP + H2O = ADP + phosphate + H(+). Functionally, the RuvA-RuvB-RuvC complex processes Holliday junction (HJ) DNA during genetic recombination and DNA repair, while the RuvA-RuvB complex plays an important role in the rescue of blocked DNA replication forks via replication fork reversal (RFR). RuvA specifically binds to HJ cruciform DNA, conferring on it an open structure. The RuvB hexamer acts as an ATP-dependent pump, pulling dsDNA into and through the RuvAB complex. RuvB forms 2 homohexamers on either side of HJ DNA bound by 1 or 2 RuvA tetramers; 4 subunits per hexamer contact DNA at a time. Coordinated motions by a converter formed by DNA-disengaged RuvB subunits stimulates ATP hydrolysis and nucleotide exchange. Immobilization of the converter enables RuvB to convert the ATP-contained energy into a lever motion, pulling 2 nucleotides of DNA out of the RuvA tetramer per ATP hydrolyzed, thus driving DNA branch migration. The RuvB motors rotate together with the DNA substrate, which together with the progressing nucleotide cycle form the mechanistic basis for DNA recombination by continuous HJ branch migration. Branch migration allows RuvC to scan DNA until it finds its consensus sequence, where it cleaves and resolves cruciform DNA. The chain is Holliday junction branch migration complex subunit RuvB from Staphylococcus carnosus (strain TM300).